Here is a 304-residue protein sequence, read N- to C-terminus: Quinolinate synthase 1 (304 aa).

Iminosuccinate contacts are provided by His24 and Ser41. Position 86 (Cys86) interacts with [4Fe-4S] cluster. Iminosuccinate-binding positions include 112–114 (YVN) and Ser129. A [4Fe-4S] cluster-binding site is contributed by Cys171. Iminosuccinate-binding positions include 197–199 (HPE) and Thr214. Residue Cys259 participates in [4Fe-4S] cluster binding.

The protein belongs to the quinolinate synthase family. Type 2 subfamily. It depends on [4Fe-4S] cluster as a cofactor.

Its subcellular location is the cytoplasm. The catalysed reaction is iminosuccinate + dihydroxyacetone phosphate = quinolinate + phosphate + 2 H2O + H(+). Its pathway is cofactor biosynthesis; NAD(+) biosynthesis; quinolinate from iminoaspartate: step 1/1. Functionally, catalyzes the condensation of iminoaspartate with dihydroxyacetone phosphate to form quinolinate. This Methanosarcina acetivorans (strain ATCC 35395 / DSM 2834 / JCM 12185 / C2A) protein is Quinolinate synthase 1.